The chain runs to 750 residues: MLPAFSPIFRRLLPAVTFERLLRFWRTLAQQTGDGVQCFVGDLPSSLKPPPGPSVLEAEVDHRFALLVSPGQWALLEGEQISPHHYAVSITFAQGIIEDFIQKQNLPVVAEAMPHRPETPSGPTIAEQLTLGLLEILNSDSTSFSPEPSLQDSLQASQVKLLSQVIAQIRQSLDLSEILNNAVTAVQKFLFVDRLVIYQFHYSQPSLTPLEENQIPAPRPRQQYGEVTYEARRSPEIDTMLGIMTENDCFSQVFSYEQKYLKGAVVAVSDIENHYSSSYCLVGLLQRYQVRAKLVAPIIVEGQLWGLLIAHQCHHPRQWLDSEKNFLGQIGEHLAVAIVQSLLYSEVQKQKNNFEKRVIERTKELRDTLMAAQAANLLKSQFINNISHELRTPLTSIIGLSATLLRWFDHPASLPPAKQQYYLLNIQENGKKLLDQINSIIQLSQLESGQTALNCQSFSLHTLAQTVIHSLLGVAIKQQINLELDYQINVGQDQFCADQERLDQILTQLLNNALKFTPAEGTVILRIWKESNQAIFQVEDTGIGINEQQLPVLFEAFKVAGDSYTSFYETGGVGLALTKQLVELHGGYIEVESSPGQGTIFTTVIPQQNFPPTTKGQVQDKLDAAMPFNSSVIVIEQDEEIATLICELLTVANYQVIWLIDTTNALQQVELLQPGLIIVDGDFVDVTEVTRGIKKSRRISKVTVFLLSESLSSAEWQALSQKGIDDYLLKPLQPELLLQRVQSIQQEPLR.

Residues 1-173 (MLPAFSPIFR…QVIAQIRQSL (173 aa)) form an N-terminal domain region. A GAF domain region spans residues 174-333 (DLSEILNNAV…KNFLGQIGEH (160 aa)). Positions 385 to 609 (NISHELRTPL…IFTTVIPQQN (225 aa)) constitute a Histidine kinase domain. The residue at position 388 (His388) is a Phosphohistidine; by autocatalysis. Positions 604 to 750 (VIPQQNFPPT…VQSIQQEPLR (147 aa)) are psR domain, bind KaiB(fs). The Response regulatory domain maps to 631-745 (SVIVIEQDEE…LLLQRVQSIQ (115 aa)). Asp680 bears the 4-aspartylphosphate mark.

In the N-terminal section; belongs to the phytochrome family. Homodimer. Part of the circadian clock (KaiA, KaiB, KaiC, CikA, RpaA, SasA), the composition of which varies during the circadian cycle. KaiA and CikA compete for binding to KaiB(fs). Interacts with RpaA.

It catalyses the reaction ATP + protein L-histidine = ADP + protein N-phospho-L-histidine.. In terms of biological role, functions in an input pathway to the Kai circadian clock. Senses oxidized quinones via its C-terminal pseudo-receiver domain, providing a link between cell metabolism and the clock. Affects the ratio of phosphorylated to unphosphorylated KaiC, binds quinones via its pseudo-receptor domain. Quinone-binding destabilizes the protein rapidly. Autophosphorylates, does not transfer the phosphate to its pseudo-receiver (PsR) domain. May play a role in cell division. Functionally, also functions in a two-component CikA/RpaA output pathway from the circadian clock, negatively regulating kaiBC expression independently of labA and of sasA. One of three clock output pathways. Dephosphorylates phospho-RpaA, enhanced by KaiB and KaiC, has only modest kinase activity on RpaA. The polypeptide is Circadian input-output histidine kinase CikA (Synechocystis sp. (strain ATCC 27184 / PCC 6803 / Kazusa)).